The primary structure comprises 352 residues: Isoflavone-7-O-methyltransferase 9 (352 aa).

118 to 127 (VLDPTLSGSY) contributes to the substrate binding site. Residues glycine 196, aspartate 219, aspartate 239, methionine 240, and lysine 253 each coordinate S-adenosyl-L-methionine. The Proton acceptor role is filled by histidine 257.

It belongs to the class I-like SAM-binding methyltransferase superfamily. Cation-independent O-methyltransferase family. COMT subfamily. In terms of assembly, homodimer.

It catalyses the reaction a 7-hydroxyisoflavone + S-adenosyl-L-methionine = a 7-methoxyisoflavone + S-adenosyl-L-homocysteine + H(+). It participates in phytoalexin biosynthesis; medicarpin biosynthesis. Transfers a methyl group to 7-hydroxyls of the isoflavones daidzein, genistein and 6,7,4'-trihydroxyisoflavone. Can also methylate (+)6a-hydroxymaackiain with lower efficiency. The protein is Isoflavone-7-O-methyltransferase 9 of Medicago sativa (Alfalfa).